We begin with the raw amino-acid sequence, 702 residues long: Flagellar operon control protein UmoB (702 aa).

Helical transmembrane passes span 4 to 24 (SVIILAIFMISLFIMAAFLFF), 204 to 224 (GFWNGSLICLGLILWLTALMM), 227 to 247 (VFLPWIMAAGGTFLVLGLFLI), 343 to 363 (IIFVVCSLFIIGMLYLYQPLS), and 656 to 676 (GNTLLLFFAIGFLILNLFFII).

It belongs to the IgaA family.

Its subcellular location is the cell inner membrane. Its function is as follows. Up-regulator of flagellar flhDC master operon. The protein is Flagellar operon control protein UmoB (umoB) of Proteus mirabilis.